A 126-amino-acid chain; its full sequence is Fatty acid-binding protein, liver (126 aa).

Residue A2 is modified to N-acetylalanine.

This sequence belongs to the calycin superfamily. Fatty-acid binding protein (FABP) family. In terms of tissue distribution, liver.

Its subcellular location is the cytoplasm. Its function is as follows. Binds free fatty acids and their coenzyme A derivatives, bilirubin, and some other small molecules in the cytoplasm. May be involved in intracellular lipid transport this L-FABP binds only one fatty acid/molecule. Has more affinity for trans-parinaric acid than for cis-parinaric acid. This chain is Fatty acid-binding protein, liver (fabp1), found in Rhamdia sapo (South American catfish).